Reading from the N-terminus, the 269-residue chain is Phycobilisome 37.5 kDa linker polypeptide, phycocyanin-associated, rod (269 aa).

Residues 2 to 177 form the PBS-linker domain; it reads TSSTAARQLG…IYRGYANSDR (176 aa). Positions 217–269 constitute a CpcD-like domain; that stretch reads GQLYRVRVIQADRGRTTQIRRSIQEYLVSYDQLSPTLQRLNQRGSRVVNISPA.

The protein belongs to the phycobilisome linker protein family.

It localises to the cellular thylakoid membrane. Rod linker protein, associated with phycocyanin. Linker polypeptides determine the state of aggregation and the location of the disk-shaped phycobiliprotein units within the phycobilisome and modulate their spectroscopic properties in order to mediate a directed and optimal energy transfer. The polypeptide is Phycobilisome 37.5 kDa linker polypeptide, phycocyanin-associated, rod (cpcH2) (Microchaete diplosiphon (Fremyella diplosiphon)).